A 731-amino-acid chain; its full sequence is Nucleolar GTP-binding protein 2 (731 aa).

Disordered regions lie at residues 1 to 27 (MGKGKNHDRKANPGFGKVKSKSGTSTG) and 130 to 162 (LQDDTKDSGSRPHIVETEPFGDTFGPKAQRKRP). Residues 132-145 (DDTKDSGSRPHIVE) show a composition bias toward basic and acidic residues. Residues 223-396 (WGELYKVLDS…LIDCPGIVPV (174 aa)) form the CP-type G domain. GTP contacts are provided by residues 345–352 (GYPNTGKS) and 389–393 (DCPGI). Disordered regions lie at residues 517–541 (TTEAEKKKTEAEEQELAEERETMEI) and 585–731 (EEEV…KKRR). Positions 519 to 541 (EAEKKKTEAEEQELAEERETMEI) are enriched in basic and acidic residues. Acidic residues predominate over residues 597–655 (EKEEEEEEEEDEDEDEEEEELAWEDVFPEEADAVDGGEEVEESDKEETDDEEDVDEEEA). Polar residues predominate over residues 685-698 (TNKQKATNFYTHAN). Residues 699–715 (VKNRNRDRKVPKNPGKR) show a composition bias toward basic residues.

It belongs to the TRAFAC class YlqF/YawG GTPase family. NOG2 subfamily.

It is found in the nucleus. The protein localises to the nucleolus. In terms of biological role, GTPase that associates with pre-60S ribosomal subunits in the nucleolus and is required for their nuclear export and maturation. This is Nucleolar GTP-binding protein 2 (NOG2) from Cryptococcus gattii (Filobasidiella gattii).